The primary structure comprises 360 residues: Phospho-N-acetylmuramoyl-pentapeptide-transferase (360 aa).

Transmembrane regions (helical) follow at residues 26–46 (AILG…KLIE), 74–94 (MGGL…GDLG), 97–117 (YVWV…IDDY), 134–154 (YILQ…TAAN), 168–188 (VMPQ…VGSS), 199–219 (GLAI…AYLS), 236–256 (SGEL…FLWF), 263–283 (VFMG…IAVL), 288–308 (ILLV…ILQV), and 338–358 (VIVR…ATLK).

The protein belongs to the glycosyltransferase 4 family. MraY subfamily. It depends on Mg(2+) as a cofactor.

It is found in the cell inner membrane. It carries out the reaction UDP-N-acetyl-alpha-D-muramoyl-L-alanyl-gamma-D-glutamyl-meso-2,6-diaminopimeloyl-D-alanyl-D-alanine + di-trans,octa-cis-undecaprenyl phosphate = di-trans,octa-cis-undecaprenyl diphospho-N-acetyl-alpha-D-muramoyl-L-alanyl-D-glutamyl-meso-2,6-diaminopimeloyl-D-alanyl-D-alanine + UMP. The protein operates within cell wall biogenesis; peptidoglycan biosynthesis. Functionally, catalyzes the initial step of the lipid cycle reactions in the biosynthesis of the cell wall peptidoglycan: transfers peptidoglycan precursor phospho-MurNAc-pentapeptide from UDP-MurNAc-pentapeptide onto the lipid carrier undecaprenyl phosphate, yielding undecaprenyl-pyrophosphoryl-MurNAc-pentapeptide, known as lipid I. In Shewanella putrefaciens (strain CN-32 / ATCC BAA-453), this protein is Phospho-N-acetylmuramoyl-pentapeptide-transferase.